A 199-amino-acid chain; its full sequence is ATP-dependent Clp protease proteolytic subunit 3 (199 aa).

Residue Ser101 is the Nucleophile of the active site. Residue His126 is part of the active site.

It belongs to the peptidase S14 family. In terms of assembly, fourteen ClpP subunits assemble into 2 heptameric rings which stack back to back to give a disk-like structure with a central cavity, resembling the structure of eukaryotic proteasomes.

It localises to the cytoplasm. The enzyme catalyses Hydrolysis of proteins to small peptides in the presence of ATP and magnesium. alpha-casein is the usual test substrate. In the absence of ATP, only oligopeptides shorter than five residues are hydrolyzed (such as succinyl-Leu-Tyr-|-NHMec, and Leu-Tyr-Leu-|-Tyr-Trp, in which cleavage of the -Tyr-|-Leu- and -Tyr-|-Trp bonds also occurs).. In terms of biological role, cleaves peptides in various proteins in a process that requires ATP hydrolysis. Has a chymotrypsin-like activity. Plays a major role in the degradation of misfolded proteins. The sequence is that of ATP-dependent Clp protease proteolytic subunit 3 from Synechococcus elongatus (strain ATCC 33912 / PCC 7942 / FACHB-805) (Anacystis nidulans R2).